We begin with the raw amino-acid sequence, 100 residues long: ATP synthase subunit c (100 aa).

2 consecutive transmembrane segments (helical) span residues 30-50 (LLYL…GVGM) and 80-100 (AFIE…LFVV).

The protein belongs to the ATPase C chain family. In terms of assembly, F-type ATPases have 2 components, F(1) - the catalytic core - and F(0) - the membrane proton channel. F(1) has five subunits: alpha(3), beta(3), gamma(1), delta(1), epsilon(1). F(0) has three main subunits: a(1), b(2) and c(10-14). The alpha and beta chains form an alternating ring which encloses part of the gamma chain. F(1) is attached to F(0) by a central stalk formed by the gamma and epsilon chains, while a peripheral stalk is formed by the delta and b chains.

It localises to the cell inner membrane. In terms of biological role, f(1)F(0) ATP synthase produces ATP from ADP in the presence of a proton or sodium gradient. F-type ATPases consist of two structural domains, F(1) containing the extramembraneous catalytic core and F(0) containing the membrane proton channel, linked together by a central stalk and a peripheral stalk. During catalysis, ATP synthesis in the catalytic domain of F(1) is coupled via a rotary mechanism of the central stalk subunits to proton translocation. Key component of the F(0) channel; it plays a direct role in translocation across the membrane. A homomeric c-ring of between 10-14 subunits forms the central stalk rotor element with the F(1) delta and epsilon subunits. The polypeptide is ATP synthase subunit c (Aquifex aeolicus (strain VF5)).